A 666-amino-acid chain; its full sequence is Peptidase S41 family protein phomP1 (666 aa).

Positions 1–27 (MSSFLVQTAVVRLFLLGVVFWFPFALS) are cleaved as a signal peptide. N70, N214, and N234 each carry an N-linked (GlcNAc...) asparagine glycan. The segment at 303–504 (DVAVLQITSF…LLQAQGVRTV (202 aa)) is peptidase S41 domain. N555 and N612 each carry an N-linked (GlcNAc...) asparagine glycan.

Belongs to the peptidase S41A family.

It participates in mycotoxin biosynthesis. Functionally, peptidase S41 family protein; part of the gene cluster that mediates the biosynthesis of the phomopsins, a group of hexapeptide mycotoxins which infects lupins and causes lupinosis disease in livestock. Within the pathway, phomP1 and phomP1' are probably involved in the processing of the phomA and phomA' precursors. The pathway starts with the processing of the precursor phomA by several endopeptidases including kexin proteases as well as the cluster-specific S41 family peptidase phomP1 and the oligopeptidase phomG to produce 10 identical copies of the hexapeptide Tyr-Val-Ile-Pro-Ile-Asp. After being excised from the precursor peptide, the core peptides are cyclized and modified post-translationally by enzymes encoded within the gene cluster. The timing and order of proteolysis of the phomA precursor and PTMs are still unknown. Two tyrosinase-like enzymes, phomQ1 and phomQ2, catalyze the chlorination and hydroxylation of Tyr, respectively. PhomYb, is proposed to be involved in the construction of the macrocyclic structure. The other 4 ustYa family proteins may be involved in PTMs that generate the unique structure of phomopsin A. PhomYa is required for the hydroxylation of C-beta of Tyr. PhomYc, phomYd, and phomYe are responsible for the biosynthesis of 2,3-dehydroisoleucine (dIle), 2,3-dehydroaspartic acid (dAsp), and 3,4-dehydroproline (dPro), respectively. While dIle formation by phomYc is indispensable for the installation of dAsp by phomYd, the order of the other PTMs have not been elucidated yet. Most of the biosynthetic enzymes likely have broad substrate specificity, and thus, there might be a metabolic grid from a precursor to phomopsin A. The enzyme(s) responsible for the biosynthesis of 3,4-dehydrovaline (dVal) have also not been identified yet. Finally, phomM acts as an S-adenosylmethionine-dependent alpha-N-methyltransferase that catalyzes two successive N-methylation reactions, converting N-desmethyl-phomopsin A to phomopsin A and phomopsin A further to an N,N-dimethylated congener called phomopsin E. The chain is Peptidase S41 family protein phomP1 from Diaporthe leptostromiformis (Lupinosis disease fungus).